The sequence spans 593 residues: Meiotic recombination protein REC8 homolog (593 aa).

The residue at position 149 (Ser-149) is a Phosphoserine. The residue at position 164 (Thr-164) is a Phosphothreonine. Ser-192 carries the post-translational modification Phosphoserine. Disordered stretches follow at residues 247–282 (QRRA…AQVE), 317–344 (ELRL…RRGR), and 422–444 (PQLE…RRKT). Basic and acidic residues predominate over residues 255-265 (DESKEEPRALE). The span at 432–444 (EERVADKEERRKT) shows a compositional bias: basic and acidic residues.

This sequence belongs to the rad21 family. In terms of assembly, interacts (phosphorylated and unphosphorylated form) with SMC3. Interacts with SYCP3. Interacts (phosphorylated and unphosphorylated form) with SMC1B. Does not interact with SMC1A. Interacts with RAD51. Forms a complex with EWSR1, PRDM9, SYCP3 and SYCP1; complex formation is dependent of phosphorylated form of REC8 and requires PRDM9 bound to hotspot DNA; EWSR1 joins PRDM9 with the chromosomal axis through REC8. Phosphorylated.

The protein localises to the nucleus. It is found in the chromosome. Its subcellular location is the centromere. Its function is as follows. Required during meiosis for separation of sister chromatids and homologous chromosomes. Proteolytic cleavage of REC8 on chromosome arms by separin during anaphase I allows for homologous chromosome separation in meiosis I and cleavage of REC8 on centromeres during anaphase II allows for sister chromatid separation in meiosis II. The chain is Meiotic recombination protein REC8 homolog from Rattus norvegicus (Rat).